The sequence spans 664 residues: Probable LRR receptor-like serine/threonine-protein kinase At1g63430 (664 aa).

The N-terminal stretch at 1-22 (MRSKYFCSLALVLGLFFVSCDG) is a signal peptide. Residues 23-288 (FASNEVQALR…KHHRASKPKW (266 aa)) lie on the Extracellular side of the membrane. N-linked (GlcNAc...) asparagine glycosylation occurs at asparagine 75. LRR repeat units lie at residues 94-116 (YLQELILHGNILIGTIPKEIGNL), 118-140 (NLKILDLGNNHLMGPIPAEIGSL), 142-165 (GIMIINLQSNGLTGKLPAELGNLK), and 166-178 (YLRELHIDRNRLQ). N-linked (GlcNAc...) asparagine glycosylation occurs at asparagine 197. The chain crosses the membrane as a helical span at residues 289–309 (LLALEIVTGSMVGLLLLVALF). Residues 310–664 (SAVHRWNNRS…LAWAELALDS (355 aa)) are Cytoplasmic-facing. Residues 360–642 (EDFSNIIGLS…ELCETLESRI (283 aa)) form the Protein kinase domain.

The protein belongs to the protein kinase superfamily. Ser/Thr protein kinase family.

Its subcellular location is the cell membrane. It catalyses the reaction L-seryl-[protein] + ATP = O-phospho-L-seryl-[protein] + ADP + H(+). The enzyme catalyses L-threonyl-[protein] + ATP = O-phospho-L-threonyl-[protein] + ADP + H(+). This Arabidopsis thaliana (Mouse-ear cress) protein is Probable LRR receptor-like serine/threonine-protein kinase At1g63430.